Reading from the N-terminus, the 71-residue chain is Pro-glucagon (71 aa).

Belongs to the glucagon family.

The protein localises to the secreted. Its function is as follows. Plays a key role in glucose metabolism and homeostasis. Regulates blood glucose by increasing gluconeogenesis and decreasing glycolysis. The chain is Pro-glucagon (gcg) from Piaractus mesopotamicus (Small-scaled pacu).